Here is a 339-residue protein sequence, read N- to C-terminus: MAMAKALLFAILGCLCLCSAVLAARELSDDAAMAARHERWMAQYGRVYRDDAEKARRFEVFKANVAFIESFNAGNHNFWLGVNQFADLTNDEFRWMKTNKGFIPSTTRVPTGFRYENVNIDALPATVDWRTKGAVTPIKDQGQCGCCWAFSAVAAMEGIVKLSTGKLISLSEQELVDCDVHGEDQGCEGGLMDDAFKFIIKNGGLTTESNYPYAAADDKCKSVSNSVASIKGYEDVPANNEAALMKAVANQPVSVAVDGGDMTFQFYKGGVMTGSCGTDLDHGIVAIGYGKASDGTKYWLLKNSWGTTWGENGFLRMEKDISDKRGMCGLAMEPSYPTA.

An N-terminal signal peptide occupies residues 1–23 (MAMAKALLFAILGCLCLCSAVLA). 3 cysteine pairs are disulfide-bonded: Cys144–Cys187, Cys178–Cys220, and Cys276–Cys328. Cys147 is an active-site residue. Catalysis depends on residues His282 and Asn303.

The protein belongs to the peptidase C1 family. In terms of tissue distribution, low expression in mature leaves.

The protein resides in the vacuole. Cysteine protease that may have a developmental senescence specific cell death function during apoptosis, heavy metal detoxification, and hypersensitive response. The protein is Senescence-specific cysteine protease SAG39 of Oryza sativa subsp. japonica (Rice).